The sequence spans 761 residues: Complement factor B (761 aa).

The first 25 residues, 1–25 (MGIGHNPRLCLVPLILGLLCGGVGM), serve as a signal peptide directing secretion. Sushi domains lie at 35-100 (SPCS…ECKA), 101-160 (IRCP…ICDD), and 163-220 (TYCP…SCQD). Disulfide bonds link C37–C76, C62–C98, C103–C145, C131–C158, C165–C205, and C191–C218. Residues N122 and N142 are each glycosylated (N-linked (GlcNAc...) asparagine). One can recognise a VWFA domain in the interval 270–469 (NIYLVLDGSD…NLEDVFVQML (200 aa)). Residues S278 and S280 each coordinate Mg(2+). Residue N285 is glycosylated (N-linked (GlcNAc...) asparagine). A Mg(2+)-binding site is contributed by T353. A glycan (N-linked (GlcNAc...) asparagine) is linked at N378. The Peptidase S1 domain maps to 477-754 (LCGMVWEHKD…VLPWLKEKLQ (278 aa)). Intrachain disulfides connect C478-C596, C511-C527, C599-C615, C656-C682, and C695-C725. Catalysis depends on charge relay system residues H526 and D576. S699 functions as the Charge relay system in the catalytic mechanism.

Belongs to the peptidase S1 family. In terms of assembly, monomer. Interacts with complement C3b; this interaction is dependent on the presence of Mg(2+). Catalytic component of the C3 convertase of the alternative complement pathway, also named C3bBb, composed of complement factor B Bb and complement C3b. Catalytic component of the C5 convertase of the alternative complement pathway, also named C3bBb3b, composed of complement factor B Bb and additional molecules of complement C3b. Interacts to CFP; this interaction contributes to the stabilization of the active C3-convertase enzyme complex. Requires Mg(2+) as cofactor. The cofactor is Mn(2+). In terms of processing, cleaved by CFD following activation of the alternative complement system, generating Ba and Bb chains. Cleavage and activation takes place when CFB is already associated with complement C3b.

It is found in the secreted. The protein resides in the cell surface. It carries out the reaction Cleavage of Arg-|-Ser bond in complement component C3 alpha-chain to yield C3a and C3b, and Arg-|-Xaa bond in complement component C5 alpha-chain to yield C5a and C5b.. In terms of biological role, precursor of the catalytic component of the C3 and C5 convertase complexes of the alternative pathway of the complement system, a cascade of proteins that leads to phagocytosis and breakdown of pathogens and signaling that strengthens the adaptive immune system. The alternative complement pathway acts as an amplification loop that enhances other complement pathways (classical, lectin and GZMK) by promoting formation of additional C3 and C5 convertases. CFB is cleaved and activated by CFD to generate Ba and Bb chains; Bb chain constituting the catalytic component of the C3 and C5 convertases. Functionally, serine protease component of the complement C3 and C5 convertase complexes of the alternative complement pathway. Following cleavage and activation by factor D (CFD), forms the C3 convertase together with complement C3b. As part of the C3 convertase, cleaves and activates C3 into C3a anaphylatoxin and C3b opsonin, the next components of the complement pathways. When an additional complement C3b molecule binds to the C3 convertase, forms the C5 convertase, which cleaves and activates C5 into C5a anaphylatoxin and C5b component of the membrane attack complex. Its function is as follows. Involved in proliferation and differentiation of preactivated B-lymphocytes, rapid spreading of peripheral blood monocytes, stimulation of lymphocyte blastogenesis and lysis of erythrocytes. This is Complement factor B (CFB) from Bos taurus (Bovine).